The sequence spans 184 residues: Fe/S biogenesis protein NfuA (184 aa).

Residues Cys142 and Cys145 each coordinate [4Fe-4S] cluster.

The protein belongs to the NfuA family. Homodimer. [4Fe-4S] cluster is required as a cofactor.

Involved in iron-sulfur cluster biogenesis. Binds a 4Fe-4S cluster, can transfer this cluster to apoproteins, and thereby intervenes in the maturation of Fe/S proteins. Could also act as a scaffold/chaperone for damaged Fe/S proteins. This chain is Fe/S biogenesis protein NfuA, found in Wigglesworthia glossinidia brevipalpis.